The primary structure comprises 126 residues: Large ribosomal subunit protein eL32 (126 aa).

It belongs to the eukaryotic ribosomal protein eL32 family.

This Thermococcus onnurineus (strain NA1) protein is Large ribosomal subunit protein eL32.